We begin with the raw amino-acid sequence, 331 residues long: Trans-O-hydroxybenzylidenepyruvate hydratase-aldolase (331 aa).

This sequence belongs to the DapA family.

It catalyses the reaction (3E)-4-(2-hydroxyphenyl)-2-oxobut-3-enoate + H2O = salicylaldehyde + pyruvate. It participates in aromatic compound metabolism; naphthalene degradation. Its function is as follows. Involved in the naphthalene upper catabolic pathway. Catalyzes the transformation of trans-O-hydroxybenzylidenepyruvate (THBPA) to salicylaldehyde and pyruvate. The reaction is reversible. Can also use substrate which carry trans-alpha,beta-unsaturated keto acid side chain and adjacent hydroxyl group such as trans-4-(3-hydroxy-2-thianaphthenyl)-2-oxo-but-3-enoate, trans-4-(3-hydroxy-2-benzofuranyl)-2-oxobut-3-enoate, and trans-4-(3-hydroxy-2-thienyl)-2-oxobut-3-enoate. The chain is Trans-O-hydroxybenzylidenepyruvate hydratase-aldolase (nahE) from Pseudomonas putida (Arthrobacter siderocapsulatus).